The chain runs to 267 residues: NAD kinase (267 aa).

Residue Asp-45 is the Proton acceptor of the active site. Residues 45–46 (DG), 122–123 (NE), Arg-148, Asp-150, 161–166 (TAYNKS), Ala-185, and Gln-223 each bind NAD(+).

The protein belongs to the NAD kinase family. The cofactor is a divalent metal cation.

The protein resides in the cytoplasm. It carries out the reaction NAD(+) + ATP = ADP + NADP(+) + H(+). Its function is as follows. Involved in the regulation of the intracellular balance of NAD and NADP, and is a key enzyme in the biosynthesis of NADP. Catalyzes specifically the phosphorylation on 2'-hydroxyl of the adenosine moiety of NAD to yield NADP. The chain is NAD kinase from Levilactobacillus brevis (strain ATCC 367 / BCRC 12310 / CIP 105137 / JCM 1170 / LMG 11437 / NCIMB 947 / NCTC 947) (Lactobacillus brevis).